The chain runs to 171 residues: Neuronal vesicle trafficking-associated protein 2 (171 aa).

Residues 1-21 (MVKLNGNPGEKGAKPPSVEDG) form a disordered region. Topologically, residues 1–71 (MVKLNGNPGE…FRVPKIAEFT (71 aa)) are cytoplasmic. Residues 72–92 (VTILVSLALAFLACIVFLVVY) form a helical; Signal-anchor for type II membrane protein membrane-spanning segment. Residues 93 to 171 (KAFTYDHSCP…EPKPPKTQGH (79 aa)) lie on the Lumenal side of the membrane.

The protein belongs to the NSG family.

The protein localises to the membrane. The protein resides in the golgi apparatus. Its subcellular location is the trans-Golgi network membrane. It is found in the cell projection. It localises to the dendrite. The protein localises to the endosome membrane. The protein resides in the early endosome membrane. Its subcellular location is the late endosome membrane. It is found in the lysosome lumen. It localises to the cytoplasmic vesicle membrane. The protein localises to the golgi stack membrane. The protein resides in the endosome. Its subcellular location is the multivesicular body membrane. This is Neuronal vesicle trafficking-associated protein 2 from Rattus norvegicus (Rat).